A 313-amino-acid chain; its full sequence is 4-hydroxy-3-methylbut-2-enyl diphosphate reductase (313 aa).

C12 contributes to the [4Fe-4S] cluster binding site. Positions 41 and 74 each coordinate (2E)-4-hydroxy-3-methylbut-2-enyl diphosphate. Dimethylallyl diphosphate-binding residues include H41 and H74. Isopentenyl diphosphate contacts are provided by H41 and H74. Residue C96 participates in [4Fe-4S] cluster binding. Residue H124 coordinates (2E)-4-hydroxy-3-methylbut-2-enyl diphosphate. H124 provides a ligand contact to dimethylallyl diphosphate. H124 contributes to the isopentenyl diphosphate binding site. The active-site Proton donor is E126. T164 contacts (2E)-4-hydroxy-3-methylbut-2-enyl diphosphate. A [4Fe-4S] cluster-binding site is contributed by C194. Positions 222, 223, 224, and 266 each coordinate (2E)-4-hydroxy-3-methylbut-2-enyl diphosphate. Positions 222, 223, 224, and 266 each coordinate dimethylallyl diphosphate. The isopentenyl diphosphate site is built by S222, S223, N224, and S266.

The protein belongs to the IspH family. Requires [4Fe-4S] cluster as cofactor.

It catalyses the reaction isopentenyl diphosphate + 2 oxidized [2Fe-2S]-[ferredoxin] + H2O = (2E)-4-hydroxy-3-methylbut-2-enyl diphosphate + 2 reduced [2Fe-2S]-[ferredoxin] + 2 H(+). It carries out the reaction dimethylallyl diphosphate + 2 oxidized [2Fe-2S]-[ferredoxin] + H2O = (2E)-4-hydroxy-3-methylbut-2-enyl diphosphate + 2 reduced [2Fe-2S]-[ferredoxin] + 2 H(+). Its pathway is isoprenoid biosynthesis; dimethylallyl diphosphate biosynthesis; dimethylallyl diphosphate from (2E)-4-hydroxy-3-methylbutenyl diphosphate: step 1/1. It participates in isoprenoid biosynthesis; isopentenyl diphosphate biosynthesis via DXP pathway; isopentenyl diphosphate from 1-deoxy-D-xylulose 5-phosphate: step 6/6. Its function is as follows. Catalyzes the conversion of 1-hydroxy-2-methyl-2-(E)-butenyl 4-diphosphate (HMBPP) into a mixture of isopentenyl diphosphate (IPP) and dimethylallyl diphosphate (DMAPP). Acts in the terminal step of the DOXP/MEP pathway for isoprenoid precursor biosynthesis. This Protochlamydia amoebophila (strain UWE25) protein is 4-hydroxy-3-methylbut-2-enyl diphosphate reductase.